The sequence spans 147 residues: MRTYQPKPADVQRVWHVIDATDVVLGRLATQAATLLRGKHKPYFAPHIDTGDFVVVINAGKVALSGNKREQAQYHRHSGFPGGLRSTSYGELLDTRPQIIVEKAIKGMLPKNKLGRAQGTKLKVYAGPTHPHQAQQPTPFEIIQVAQ.

The protein belongs to the universal ribosomal protein uL13 family. As to quaternary structure, part of the 50S ribosomal subunit.

Functionally, this protein is one of the early assembly proteins of the 50S ribosomal subunit, although it is not seen to bind rRNA by itself. It is important during the early stages of 50S assembly. The polypeptide is Large ribosomal subunit protein uL13 (Frankia casuarinae (strain DSM 45818 / CECT 9043 / HFP020203 / CcI3)).